The sequence spans 343 residues: S-adenosylmethionine:tRNA ribosyltransferase-isomerase (343 aa).

It belongs to the QueA family. As to quaternary structure, monomer.

The protein resides in the cytoplasm. It catalyses the reaction 7-aminomethyl-7-carbaguanosine(34) in tRNA + S-adenosyl-L-methionine = epoxyqueuosine(34) in tRNA + adenine + L-methionine + 2 H(+). Its pathway is tRNA modification; tRNA-queuosine biosynthesis. In terms of biological role, transfers and isomerizes the ribose moiety from AdoMet to the 7-aminomethyl group of 7-deazaguanine (preQ1-tRNA) to give epoxyqueuosine (oQ-tRNA). In Dehalococcoides mccartyi (strain CBDB1), this protein is S-adenosylmethionine:tRNA ribosyltransferase-isomerase.